A 487-amino-acid chain; its full sequence is G-patch domain and KOW motifs-containing protein (487 aa).

Disordered regions lie at residues 65–121 (HKNR…PLLM), 181–232 (VKPL…TGSA), and 295–367 (KVHQ…RPEP). A coiled-coil region spans residues 88–116 (AVLSQAVKELIEESRRAQEDNSETNQTLS). Basic and acidic residues-rich tracts occupy residues 96–106 (ELIEESRRAQE) and 200–209 (SALKHLEPQK). The region spanning 154 to 200 (VQQYGMAMLRGMGWKEGEGIGRTFKQDVKPLEQKLRPKGLGLGADRS) is the G-patch domain. The region spanning 226 to 253 (GLGTGSAVQIQSGAYKDMYGKVEGIDPD) is the KOW 1 domain. Basic and acidic residues-rich tracts occupy residues 295-333 (KVHQ…DVKL) and 352-367 (RSPE…RPEP). One can recognise a KOW 2 domain in the interval 428–455 (PKEEGEHVMVVLGKYRGMVGKILHRDKQ).

It belongs to the MOS2 family. Component of the minor spliceosome, which splices U12-type introns.

The protein localises to the nucleus. Functionally, RNA-binding protein involved in pre-mRNA splicing. This is G-patch domain and KOW motifs-containing protein (gpkow) from Xenopus laevis (African clawed frog).